A 363-amino-acid chain; its full sequence is Pyrimidine monooxygenase RutA (363 aa).

Residues 49–50, N115, E124, 140–141, and S190 each bind FMN; these read IK and RY.

This sequence belongs to the NtaA/SnaA/DszA monooxygenase family. RutA subfamily.

It catalyses the reaction uracil + FMNH2 + NADH + O2 = (Z)-3-ureidoacrylate + FMN + NAD(+) + H2O + H(+). It carries out the reaction thymine + FMNH2 + NADH + O2 = (Z)-2-methylureidoacrylate + FMN + NAD(+) + H2O + H(+). Functionally, catalyzes the pyrimidine ring opening between N-3 and C-4 by an unusual flavin hydroperoxide-catalyzed mechanism, adding oxygen atoms in the process to yield ureidoacrylate peracid, that immediately reacts with FMN forming ureidoacrylate and FMN-N(5)-oxide. The FMN-N(5)-oxide reacts spontaneously with NADH to produce FMN. Requires the flavin reductase RutF to regenerate FMN in vivo. In Enterobacter sp. (strain 638), this protein is Pyrimidine monooxygenase RutA.